The sequence spans 146 residues: Protein STIG1 (146 aa).

A signal peptide spans 1–23 (MAFINLLILIILTLSSTPITTMS). N31, N61, and N84 each carry an N-linked (GlcNAc...) asparagine glycan.

The protein belongs to the STIG1 family. Post-translationally, glycosylated. As to expression, expressed exclusively in the stigmatic secretory zone.

The protein localises to the secreted. Its function is as follows. Involved in the temporal regulation of the exudate secretion onto the stigma. The protein is Protein STIG1 of Nicotiana tabacum (Common tobacco).